A 369-amino-acid chain; its full sequence is Molybdenum import ATP-binding protein ModC (369 aa).

Residues 7–243 (PGQAGIHARF…LDLPMAMTDD (237 aa)) form the ABC transporter domain. An ATP-binding site is contributed by 41–48 (GQSGSGKT). One can recognise a Mop domain in the interval 304–369 (EGSILNVLAV…AQIKAVSLLA (66 aa)).

The protein belongs to the ABC transporter superfamily. Molybdate importer (TC 3.A.1.8) family. In terms of assembly, the complex is composed of two ATP-binding proteins (ModC), two transmembrane proteins (ModB) and a solute-binding protein (ModA).

It is found in the cell inner membrane. It carries out the reaction molybdate(out) + ATP + H2O = molybdate(in) + ADP + phosphate + H(+). Its function is as follows. Part of the ABC transporter complex ModABC involved in molybdenum import. Responsible for energy coupling to the transport system. The chain is Molybdenum import ATP-binding protein ModC from Bordetella bronchiseptica (strain ATCC BAA-588 / NCTC 13252 / RB50) (Alcaligenes bronchisepticus).